Here is a 370-residue protein sequence, read N- to C-terminus: Platelet-derived growth factor D (370 aa).

Positions 1–23 are cleaved as a signal peptide; the sequence is MHRLILVSILVCANFCCYRDTFA. In terms of domain architecture, CUB spans 52–170; the sequence is RDENIRVTGT…PGFKIYYSFV (119 aa). Cysteines 109 and 131 form a disulfide. Residue Asn-276 is glycosylated (N-linked (GlcNAc...) asparagine). Intrachain disulfides connect Cys-302–Cys-360 and Cys-306–Cys-362.

It belongs to the PDGF/VEGF growth factor family. In terms of assembly, homodimer; disulfide-linked. Interacts with PDGFRB homodimers, and with heterodimers formed by PDGFRA and PDGFRB. In terms of processing, activated by proteolytic cleavage. Proteolytic removal of the N-terminal CUB domain releasing the core domain is necessary for unmasking the receptor-binding epitopes of the core domain. Cleavage after Arg-247 or Arg-249 by urokinase plasminogen activator gives rise to the active form. In terms of tissue distribution, widely expressed. Expressed at high levels in the kidney, adrenal glands, eye and CNS. In the kidney the localization is confined to arterial and arteriolar vascular smooth muscle cells and is also detected at low levels in the glomeruli In the eye in the anterior segment it is localized to the iris and ciliary body. In the retina localizes intensely to the outer plexiform layer, which contains photoreceptor axons and the synaptic layer between photoreceptors and second order neurons. In the spinal cord, prominently expressed in the motorneurons.

Its subcellular location is the secreted. In terms of biological role, growth factor that plays an essential role in the regulation of embryonic development, cell proliferation, cell migration, survival and chemotaxis. Potent mitogen for cells of mesenchymal origin. Plays an important role in wound healing. Induces macrophage recruitment, increased interstitial pressure, and blood vessel maturation during angiogenesis. May play an important role in control of lens epithelial cell proliferation. Can initiate events that lead to a mesangial proliferative glomerulonephritis, including influx of monocytes and macrophages and production of extracellular matrix. In Rattus norvegicus (Rat), this protein is Platelet-derived growth factor D (Pdgfd).